The primary structure comprises 609 residues: MFS siderochrome iron transporter 1 (609 aa).

2 stretches are compositionally biased toward basic and acidic residues: residues 1–17 (MSAL…EDNT) and 25–34 (PHEKEIHETP). The interval 1-69 (MSALTKIREG…NDSDVPSEDV (69 aa)) is disordered. Helical transmembrane passes span 81–101 (LTWG…LFLI), 125–145 (LMTT…IPMA), 154–174 (AEGF…MAVS), 182–202 (AAQV…GVLA), 220–240 (SPYM…VIDV), 245–265 (WGFG…FLVL), 300–320 (VIGI…FNLA), 329–349 (TGYI…FGVW), 368–390 (SVVA…NYFF), 407–427 (YVNS…GFLI), 432–452 (FYKW…GLMI), 469–489 (IFIS…VLAA), 496–516 (AAAL…GGAI), and 573–593 (IRML…VPML).

The protein belongs to the major facilitator superfamily.

It is found in the cell membrane. Functionally, major facilitator transporter involved in extracellular siderophore uptake. Gibberella zeae produces extracellular coprogen-type siderophores as well as the intracellular siderophore ferricrocin. The role of extracellular siderophores is to supply iron to the fungus during plant infection, and the intracellular ferricrocin is required for intracellular iron distribution and storage with a crucial role in ascus and ascospore development. This is MFS siderochrome iron transporter 1 from Gibberella zeae (strain ATCC MYA-4620 / CBS 123657 / FGSC 9075 / NRRL 31084 / PH-1) (Wheat head blight fungus).